The primary structure comprises 76 residues: Small ribosomal subunit protein bS16 (76 aa).

Belongs to the bacterial ribosomal protein bS16 family.

The chain is Small ribosomal subunit protein bS16 from Helicobacter pylori (strain HPAG1).